An 897-amino-acid polypeptide reads, in one-letter code: 3'-5' exonuclease DinG (897 aa).

The 154-residue stretch at 8-161 folds into the Exonuclease domain; sequence VVDLETTGNQ…DEDAATTAKL (154 aa). The Helicase ATP-binding domain occupies 241 to 496; sequence SKAVDQLGLT…KAIDQLEKQR (256 aa). 276 to 283 contacts ATP; it reads ASLGSGKS. The short motif at 448–451 is the DEAH box element; that stretch reads DEAH. In terms of domain architecture, Helicase C-terminal spans 703 to 883; the sequence is NIDEYVASIV…NYRQKKGDIQ (181 aa).

The protein belongs to the helicase family. DinG subfamily. Type 2 sub-subfamily.

In terms of biological role, 3'-5' exonuclease. The sequence is that of 3'-5' exonuclease DinG from Staphylococcus aureus (strain bovine RF122 / ET3-1).